A 160-amino-acid polypeptide reads, in one-letter code: Protein MGF 300-2R (160 aa).

It belongs to the asfivirus MGF 300 family.

In terms of biological role, plays a role in virus cell tropism, and may be required for efficient virus replication in macrophages. The sequence is that of Protein MGF 300-2R from African swine fever virus (isolate Tick/South Africa/Pretoriuskop Pr4/1996) (ASFV).